The sequence spans 83 residues: Small ribosomal subunit protein eS27 (83 aa).

The segment at 37 to 59 adopts a C4-type zinc-finger fold; the sequence is CSGCFKISTVFSHATTVVVCVGC.

The protein belongs to the eukaryotic ribosomal protein eS27 family. Requires Zn(2+) as cofactor.

The polypeptide is Small ribosomal subunit protein eS27 (rps-27) (Caenorhabditis elegans).